Consider the following 156-residue polypeptide: Small ribosomal subunit protein uS7 (156 aa).

The protein belongs to the universal ribosomal protein uS7 family. In terms of assembly, part of the 30S ribosomal subunit. Contacts proteins S9 and S11.

One of the primary rRNA binding proteins, it binds directly to 16S rRNA where it nucleates assembly of the head domain of the 30S subunit. Is located at the subunit interface close to the decoding center, probably blocks exit of the E-site tRNA. In Frankia alni (strain DSM 45986 / CECT 9034 / ACN14a), this protein is Small ribosomal subunit protein uS7.